Here is a 173-residue protein sequence, read N- to C-terminus: Bifunctional protein PyrR (173 aa).

Substrate-binding positions include 40–41 (TR), 97–105 (DDVLYTGRT), and R130. A PRPP-binding motif is present at residues 93–105 (VILIDDVLYTGRT).

The protein belongs to the purine/pyrimidine phosphoribosyltransferase family. PyrR subfamily. As to quaternary structure, homodimer and homohexamer; in equilibrium.

It catalyses the reaction UMP + diphosphate = 5-phospho-alpha-D-ribose 1-diphosphate + uracil. Functionally, regulates transcriptional attenuation of the pyrimidine nucleotide (pyr) operon by binding in a uridine-dependent manner to specific sites on pyr mRNA. This disrupts an antiterminator hairpin in the RNA and favors formation of a downstream transcription terminator, leading to a reduced expression of downstream genes. Also displays a weak uracil phosphoribosyltransferase activity which is not physiologically significant. The sequence is that of Bifunctional protein PyrR from Streptococcus pyogenes serotype M6 (strain ATCC BAA-946 / MGAS10394).